Consider the following 359-residue polypeptide: Guanine nucleotide-binding protein subunit alpha-11 (359 aa).

Residues C9 and C10 are each lipidated (S-palmitoyl cysteine). The 322-residue stretch at R38–V359 folds into the G-alpha domain. Positions K41–T54 are G1 motif. GTP-binding positions include G46 to S53 and L180 to R183. A Mg(2+)-binding site is contributed by S53. Residues D178–T186 form a G2 motif region. T186 contributes to the Mg(2+) binding site. The segment at F201–R210 is G3 motif. Q209 bears the Deamidated glutamine; by Photorhabdus PAU_02230 mark. Residues I270–D277 form a G4 motif region. GTP-binding positions include N274 to D277 and A331. The segment at T329 to T334 is G5 motif.

It belongs to the G-alpha family. G(q) subfamily. In terms of assembly, g proteins are composed of 3 units; alpha, beta and gamma. The alpha chain contains the guanine nucleotide binding site. Interacts with RGS22. Interacts with NTSR1. (Microbial infection) Interacts with human cytomegalovirus (HHV-5) US28. Post-translationally, (Microbial infection) Deamidated at Gln-209 by Photorhabdus asymbiotica toxin PAU_02230, blocking GTP hydrolysis of heterotrimeric GNAQ or GNA11 and G-alphai (GNAI1, GNAI2 or GNAI3) proteins, thereby activating RhoA. In terms of tissue distribution, expressed in testis.

It is found in the cell membrane. Its subcellular location is the cytoplasm. The catalysed reaction is GTP + H2O = GDP + phosphate + H(+). Its function is as follows. Guanine nucleotide-binding proteins (G proteins) function as transducers downstream of G protein-coupled receptors (GPCRs) in numerous signaling cascades. The alpha chain contains the guanine nucleotide binding site and alternates between an active, GTP-bound state and an inactive, GDP-bound state. Signaling by an activated GPCR promotes GDP release and GTP binding. The alpha subunit has a low GTPase activity that converts bound GTP to GDP, thereby terminating the signal. Both GDP release and GTP hydrolysis are modulated by numerous regulatory proteins. Signaling is mediated via phospholipase C-beta-dependent inositol lipid hydrolysis for signal propagation: activates phospholipase C-beta: following GPCR activation, GNA11 activates PLC-beta (PLCB1, PLCB2, PLCB3 or PLCB4), leading to production of diacylglycerol (DAG) and inositol 1,4,5-trisphosphate (IP3). Transduces FFAR4 signaling in response to long-chain fatty acids (LCFAs). Together with GNAQ, required for heart development. In the respiratory epithelium, transmits OXGR1-dependent signals that lead to downstream intracellular Ca(2+) release and mucocilliary clearance of airborne pathogens. The sequence is that of Guanine nucleotide-binding protein subunit alpha-11 (GNA11) from Homo sapiens (Human).